Here is a 390-residue protein sequence, read N- to C-terminus: NADH-quinone oxidoreductase subunit D (390 aa).

This sequence belongs to the complex I 49 kDa subunit family. NDH-1 is composed of 14 different subunits. Subunits NuoB, C, D, E, F, and G constitute the peripheral sector of the complex.

It is found in the cell inner membrane. The catalysed reaction is a quinone + NADH + 5 H(+)(in) = a quinol + NAD(+) + 4 H(+)(out). Functionally, NDH-1 shuttles electrons from NADH, via FMN and iron-sulfur (Fe-S) centers, to quinones in the respiratory chain. The immediate electron acceptor for the enzyme in this species is believed to be ubiquinone. Couples the redox reaction to proton translocation (for every two electrons transferred, four hydrogen ions are translocated across the cytoplasmic membrane), and thus conserves the redox energy in a proton gradient. This is NADH-quinone oxidoreductase subunit D from Geotalea uraniireducens (strain Rf4) (Geobacter uraniireducens).